The following is a 102-amino-acid chain: Small ribosomal subunit protein uS10 (102 aa).

Belongs to the universal ribosomal protein uS10 family. In terms of assembly, part of the 30S ribosomal subunit.

In terms of biological role, involved in the binding of tRNA to the ribosomes. The sequence is that of Small ribosomal subunit protein uS10 from Methanobrevibacter smithii (strain ATCC 35061 / DSM 861 / OCM 144 / PS).